The primary structure comprises 227 residues: Large ribosomal subunit protein uL10c (227 aa).

Residues 1–47 (MEATFFTLPSSTSHSYPFSLKSHFNNSLTLPTHPHFKPKSKNLTIRS) constitute a chloroplast transit peptide.

Belongs to the universal ribosomal protein uL10 family. As to quaternary structure, part of the 50S ribosomal subunit.

The protein resides in the plastid. Its subcellular location is the chloroplast. Functionally, this protein binds directly to 23S ribosomal RNA. In Nicotiana tabacum (Common tobacco), this protein is Large ribosomal subunit protein uL10c (RPL10).